Here is a 201-residue protein sequence, read N- to C-terminus: Regulator of G-protein signaling 16 (201 aa).

2 S-palmitoyl cysteine lipidation sites follow: cysteine 2 and cysteine 12. Residues 64-180 (SFDLLLNSKN…LKSPAYRDLA (117 aa)) form the RGS domain. Tyrosine 167 carries the post-translational modification Phosphotyrosine; by EGFR. At tyrosine 176 the chain carries Phosphotyrosine. A disordered region spans residues 181–201 (AQASATSTSAPSGSPAEPSHT).

Interacts with GNAI1 and GNAQ. Interacts with GNAI3, GNAI3 and GNAO1. Post-translationally, palmitoylated on Cys-2 and/or Cys-12. Phosphorylated. Phosphorylation at Tyr-167 by EGFR enhances GTPase accelerating (GAP) activity toward GNAI1. As to expression, retinal; also predominantly expressed in the liver and pituitary.

It is found in the membrane. In terms of biological role, regulates G protein-coupled receptor signaling cascades. Inhibits signal transduction by increasing the GTPase activity of G protein alpha subunits, thereby driving them into their inactive GDP-bound form. Plays an important role in the phototransduction cascade by regulating the lifetime and effective concentration of activated transducin alpha. May regulate extra and intracellular mitogenic signals. The sequence is that of Regulator of G-protein signaling 16 (Rgs16) from Mus musculus (Mouse).